A 418-amino-acid polypeptide reads, in one-letter code: Pyrophosphate--fructose 6-phosphate 1-phosphotransferase (418 aa).

Residue Gly-13 coordinates diphosphate. Residue Asn-111 participates in Mg(2+) binding. Residues 139-141 (TID), 187-189 (MGR), Glu-244, and 295-298 (YLQR) contribute to the substrate site. The Proton acceptor role is filled by Asp-141.

This sequence belongs to the phosphofructokinase type A (PFKA) family. PPi-dependent PFK group II subfamily. Clade 'B2' sub-subfamily. Homodimer. It depends on Mg(2+) as a cofactor.

It localises to the cytoplasm. The enzyme catalyses beta-D-fructose 6-phosphate + diphosphate = beta-D-fructose 1,6-bisphosphate + phosphate + H(+). It participates in carbohydrate degradation; glycolysis; D-glyceraldehyde 3-phosphate and glycerone phosphate from D-glucose: step 3/4. Non-allosteric. Functionally, catalyzes the phosphorylation of D-fructose 6-phosphate, the first committing step of glycolysis. Uses inorganic phosphate (PPi) as phosphoryl donor instead of ATP like common ATP-dependent phosphofructokinases (ATP-PFKs), which renders the reaction reversible, and can thus function both in glycolysis and gluconeogenesis. Consistently, PPi-PFK can replace the enzymes of both the forward (ATP-PFK) and reverse (fructose-bisphosphatase (FBPase)) reactions. The sequence is that of Pyrophosphate--fructose 6-phosphate 1-phosphotransferase from Xanthomonas campestris pv. campestris (strain B100).